Here is a 511-residue protein sequence, read N- to C-terminus: Early growth response protein 1 (511 aa).

Disordered stretches follow at residues 133–169 (ASIP…LSCS) and 291–312 (PSRM…RPYA). Residues 137 to 169 (SSTSQATHPSSSSTSSIPSSSSSSTSSASLSCS) show a composition bias toward low complexity. 3 consecutive C2H2-type zinc fingers follow at residues 311 to 335 (YACP…IRIH), 341 to 363 (FQCR…IRTH), and 369 to 391 (FACE…TKIH). The disordered stretch occupies residues 384–406 (RKRHTKIHMRQKDKKAEKGATAA). A compositionally biased stretch (basic residues) spans 386 to 396 (RHTKIHMRQKD).

It belongs to the EGR C2H2-type zinc-finger protein family. As to expression, detected in muscle and brain.

Its subcellular location is the nucleus. The protein resides in the cytoplasm. Transcriptional regulator. Recognizes and binds to the DNA sequence 5'-GCG(T/G)GGGCG-3'(EGR-site) in the promoter region of target genes. Binds double-stranded target DNA, irrespective of the cytosine methylation status. Regulates the transcription of numerous target genes, and thereby plays an important role in regulating the response to growth factors, DNA damage, and ischemia. Plays a role in the regulation of cell survival, proliferation and cell death. Mediates responses to ischemia and hypoxia; regulates the expression of proteins that are involved in inflammatory processes. Plays a role in regulating the expression of circadian clock genes. Plays a role in the organization of Muller glia cells in the inner and outer plexiform layers of the retina. The polypeptide is Early growth response protein 1 (egr1) (Danio rerio (Zebrafish)).